The primary structure comprises 413 residues: BSD domain-containing protein 1-A (413 aa).

A BSD domain is found at 146 to 198 (WLAYWDPEQRKAEISELLVTSPSIRALFTKMVPAAVSHSEFWQRYFYKVHQLE). Basic and acidic residues-rich tracts occupy residues 208–219 (KQRADQSVHSEE) and 255–271 (HVEDKSEKTAELNRDHT). 2 disordered regions span residues 208 to 228 (KQRADQSVHSEEPTWEEEEED) and 255 to 386 (HVED…EFDM). The span at 274–287 (TSPSESSESISPIT) shows a compositional bias: low complexity. Positions 297 to 322 (QTPSKEPSPGTLTVTKENTGAGTDET) are enriched in polar residues. Basic and acidic residues predominate over residues 342–352 (QREDPPSDLRV). Positions 356–375 (NSDSGKSTPSNNGQKGSSTD) are enriched in polar residues. The segment covering 376–386 (ISEDWEKEFDM) has biased composition (acidic residues).

This is BSD domain-containing protein 1-A (bsdc1-a) from Xenopus laevis (African clawed frog).